Consider the following 468-residue polypeptide: Mitochondrial dynamics protein MID51 (468 aa).

Residues 1-29 (MAGVNGDRKGKKDDNGLGTAIDFVLSNAK) are Mitochondrial intermembrane-facing. Residues 30 to 47 (LVLGVGGAAMLGIATLAV) form a helical membrane-spanning segment. The Cytoplasmic portion of the chain corresponds to 48–468 (KRMYDRALSA…SDPESLLRTV (421 aa)). A dimerization region spans residues 50–196 (MYDRALSAPS…LSGSLYDDLQ (147 aa)). The disordered stretch occupies residues 56 to 123 (SAPSSPTKAD…RGLARGGRPA (68 aa)). Residues 91–108 (QNVSRSLQTLPTSSSSFK) show a composition bias toward polar residues. Residues 161-170 (AALDICAELR) are important for interaction with DNM1L. ADP is bound by residues S188, S190, and H202. An important for interaction with DNM1L region spans residues 235–244 (RRENLEYFPR). ADP-binding residues include S344, R346, and K372.

It belongs to the MID49/MID51 family. As to quaternary structure, homodimer.

It is found in the mitochondrion outer membrane. Mitochondrial outer membrane protein which regulates mitochondrial fission/fusion dynamics. Promotes the recruitment and association of the fission mediator dynamin-related protein 1 (DNM1L) to the mitochondrial surface independently of the mitochondrial fission FIS1 and MFF proteins. Regulates DNM1L GTPase activity and DNM1L oligomerization. This chain is Mitochondrial dynamics protein MID51 (mief1), found in Danio rerio (Zebrafish).